The sequence spans 195 residues: uncharacterized protein (195 aa).

The next 4 helical transmembrane spans lie at serine 89 to proline 106, histidine 111 to arginine 128, valine 149 to leucine 168, and leucine 172 to isoleucine 194.

It localises to the cell membrane. This is an uncharacterized protein from Bacillus subtilis (strain 168).